The sequence spans 352 residues: Phospho-N-acetylmuramoyl-pentapeptide-transferase (352 aa).

10 helical membrane passes run 10–30, 67–87, 88–108, 129–149, 159–179, 191–211, 227–247, 255–275, 280–300, and 329–349; these read YMFF…ALFL, TMGG…CADL, NNFY…IGLV, LLSQ…MGIN, YALF…IISS, GLAT…LYLS, GLGE…GFLW, VFMG…LGIV, ILLL…ILQV, and KIIV…LISI.

Belongs to the glycosyltransferase 4 family. MraY subfamily. Mg(2+) serves as cofactor.

The protein resides in the cell inner membrane. The catalysed reaction is UDP-N-acetyl-alpha-D-muramoyl-L-alanyl-gamma-D-glutamyl-meso-2,6-diaminopimeloyl-D-alanyl-D-alanine + di-trans,octa-cis-undecaprenyl phosphate = di-trans,octa-cis-undecaprenyl diphospho-N-acetyl-alpha-D-muramoyl-L-alanyl-D-glutamyl-meso-2,6-diaminopimeloyl-D-alanyl-D-alanine + UMP. Its pathway is cell wall biogenesis; peptidoglycan biosynthesis. Functionally, catalyzes the initial step of the lipid cycle reactions in the biosynthesis of the cell wall peptidoglycan: transfers peptidoglycan precursor phospho-MurNAc-pentapeptide from UDP-MurNAc-pentapeptide onto the lipid carrier undecaprenyl phosphate, yielding undecaprenyl-pyrophosphoryl-MurNAc-pentapeptide, known as lipid I. The chain is Phospho-N-acetylmuramoyl-pentapeptide-transferase from Campylobacter lari (strain RM2100 / D67 / ATCC BAA-1060).